The following is a 98-amino-acid chain: Co-chaperonin GroES (98 aa).

This sequence belongs to the GroES chaperonin family. As to quaternary structure, heptamer of 7 subunits arranged in a ring. Interacts with the chaperonin GroEL.

It localises to the cytoplasm. Its function is as follows. Together with the chaperonin GroEL, plays an essential role in assisting protein folding. The GroEL-GroES system forms a nano-cage that allows encapsulation of the non-native substrate proteins and provides a physical environment optimized to promote and accelerate protein folding. GroES binds to the apical surface of the GroEL ring, thereby capping the opening of the GroEL channel. In Neorickettsia sennetsu (strain ATCC VR-367 / Miyayama) (Ehrlichia sennetsu), this protein is Co-chaperonin GroES.